Reading from the N-terminus, the 117-residue chain is Ribonuclease P protein component 4 (117 aa).

4 residues coordinate Zn(2+): cysteine 64, cysteine 67, cysteine 93, and cysteine 96.

This sequence belongs to the eukaryotic/archaeal RNase P protein component 4 family. As to quaternary structure, consists of a catalytic RNA component and at least 4-5 protein subunits. Zn(2+) serves as cofactor.

It localises to the cytoplasm. It carries out the reaction Endonucleolytic cleavage of RNA, removing 5'-extranucleotides from tRNA precursor.. Part of ribonuclease P, a protein complex that generates mature tRNA molecules by cleaving their 5'-ends. This chain is Ribonuclease P protein component 4, found in Pyrococcus abyssi (strain GE5 / Orsay).